A 105-amino-acid polypeptide reads, in one-letter code: Small ribosomal subunit protein uS10 (105 aa).

Belongs to the universal ribosomal protein uS10 family. As to quaternary structure, part of the 30S ribosomal subunit.

Its function is as follows. Involved in the binding of tRNA to the ribosomes. This is Small ribosomal subunit protein uS10 from Nitratidesulfovibrio vulgaris (strain DSM 19637 / Miyazaki F) (Desulfovibrio vulgaris).